Here is a 291-residue protein sequence, read N- to C-terminus: Pantothenate synthetase (291 aa).

Met-30 to His-37 lines the ATP pocket. His-37 functions as the Proton donor in the catalytic mechanism. Gln-61 lines the (R)-pantoate pocket. A beta-alanine-binding site is contributed by Gln-61. Gly-147 to Asp-150 contacts ATP. Gln-153 contributes to the (R)-pantoate binding site. ATP contacts are provided by residues Val-176 and Leu-184–Arg-187.

The protein belongs to the pantothenate synthetase family. As to quaternary structure, homodimer.

The protein localises to the cytoplasm. The enzyme catalyses (R)-pantoate + beta-alanine + ATP = (R)-pantothenate + AMP + diphosphate + H(+). It functions in the pathway cofactor biosynthesis; (R)-pantothenate biosynthesis; (R)-pantothenate from (R)-pantoate and beta-alanine: step 1/1. Catalyzes the condensation of pantoate with beta-alanine in an ATP-dependent reaction via a pantoyl-adenylate intermediate. This Rhizobium rhizogenes (strain K84 / ATCC BAA-868) (Agrobacterium radiobacter) protein is Pantothenate synthetase.